Consider the following 408-residue polypeptide: Glutaryl-CoA dehydrogenase, mitochondrial (408 aa).

A mitochondrion-targeting transit peptide spans 1 to 13; that stretch reads KGGKTQGRSAKSS. Residues 107 to 108 and Ser156 each bind substrate; that span reads RS. Residues 147 to 156, Ser156, and 182 to 184 contribute to the FAD site; these read FGLTEPNHGS and WIT. The residue at position 210 (Lys210) is an N6-acetyllysine. 257–264 is a substrate binding site; sequence FGCLNNAR. Residues Arg289, Gln300, and 357 to 361 contribute to the FAD site; that span reads DMLGG. Residue Glu384 is the Proton acceptor of the active site. Residue Gly385 coordinates substrate. Residues Thr386, 386 to 388, and Phe404 contribute to the FAD site; that span reads THD.

Belongs to the acyl-CoA dehydrogenase family. Homotetramer. Requires FAD as cofactor.

It localises to the mitochondrion matrix. The enzyme catalyses glutaryl-CoA + oxidized [electron-transfer flavoprotein] + 2 H(+) = (2E)-butenoyl-CoA + reduced [electron-transfer flavoprotein] + CO2. It functions in the pathway amino-acid metabolism; lysine degradation. Its pathway is amino-acid metabolism; tryptophan metabolism. Its function is as follows. Catalyzes the oxidative decarboxylation of glutaryl-CoA to crotonyl-CoA and CO(2) in the degradative pathway of L-lysine, L-hydroxylysine, and L-tryptophan metabolism. It uses electron transfer flavoprotein as its electron acceptor. The chain is Glutaryl-CoA dehydrogenase, mitochondrial (GCDH) from Sus scrofa (Pig).